The following is a 96-amino-acid chain: Co-chaperonin GroES (96 aa).

Belongs to the GroES chaperonin family. Heptamer of 7 subunits arranged in a ring. Interacts with the chaperonin GroEL.

It is found in the cytoplasm. In terms of biological role, together with the chaperonin GroEL, plays an essential role in assisting protein folding. The GroEL-GroES system forms a nano-cage that allows encapsulation of the non-native substrate proteins and provides a physical environment optimized to promote and accelerate protein folding. GroES binds to the apical surface of the GroEL ring, thereby capping the opening of the GroEL channel. The chain is Co-chaperonin GroES from Haemophilus influenzae (strain PittEE).